The sequence spans 433 residues: MSSEKFTVTEHLVPGSYIREYPGSTVTQEDVLKIHVKQYTPKHEGPVPADAITFIAAHGVGLPKELYEPLWDELLERTNGFHIHGIWVADVASMNQSGIQNEDKLSMDCSWMDHPRDLFLMINHFREQMPRPLVGVGHSFGGNIITNLAYLHPRLFTTLLLIDPLIQLSPPSMGFGTDPPGPINYTLWRNDVWPSREAAIRANRGLIHGWDPRCVDRMAKYFFRDLPTPLYPDVEAVKARFDAAADTTATPVTLATPKYHELIAQIRQNFNARDPTTGRIEIPRATHADMDPLVASIPLYRPEPRSTFRRLGTLRPSCLWIVGGATFLNVDEIHEGVKICGSGIGGSGGVSEGRVKEVILPGLGHLMPFQEIGTVVGPCVAWLQQEMDRFRQMEREWGEERKGKSHLVLEKNWYKVLKPMPSGRGKGGRKEKL.

An abhydrolase domain region spans residues 58-246 (HGVGLPKELY…VKARFDAAAD (189 aa)). Valine 60 provides a ligand contact to substrate. Serine 139 (nucleophile) is an active-site residue. Phenylalanine 140 is a substrate binding site. Catalysis depends on residues aspartate 163 and histidine 365.

Belongs to the AB hydrolase superfamily. MpaH hydrolase family. In terms of assembly, homodimer.

Its subcellular location is the peroxisome matrix. The catalysed reaction is mycophenolyl-CoA + H2O = mycophenolate + CoA + H(+). It functions in the pathway secondary metabolite biosynthesis; terpenoid biosynthesis. Functionally, type I acyl-CoA thioesterase; part of the gene cluster that mediates the biosynthesis of mycophenolic acid (MPA), the first isolated antibiotic natural product in the world obtained from a culture of Penicillium brevicompactum in 1893. MpaH acts as a peroxisomal acyl-CoA hydrolase that converts MPA-CoA into the final product MPA. The first step of the pathway is the synthesis of 5-methylorsellinic acid (5MOA) by the cytosolic polyketide synthase mpaC. 5MOA is then converted to the phthalide compound 5,7-dihydroxy-4,6-dimethylphthalide (DHMP) by the endoplasmic reticulum-bound cytochrome P450 monooxygenase mpaDE. MpaDE first catalyzes hydroxylation of 5-MOA to 4,6-dihydroxy-2-(hydroxymethyl)-3-methylbenzoic acid (DHMB). MpaDE then acts as a lactone synthase that catalyzes the ring closure to convert DHMB into DHMP. The next step is the prenylation of DHMP by the Golgi apparatus-associated prenyltransferase mpaA to yield farnesyl-DHMP (FDHMP). The ER-bound oxygenase mpaB then mediates the oxidative cleavage the C19-C20 double bond in FDHMP to yield FDHMP-3C via a mycophenolic aldehyde intermediate. The O-methyltransferase mpaG catalyzes the methylation of FDHMP-3C to yield MFDHMP-3C. After the cytosolic methylation of FDHMP-3C, MFDHMP-3C enters into peroxisomes probably via free diffusion due to its low molecular weight. Upon a peroxisomal CoA ligation reaction, catalyzed by a beta-oxidation component enzyme acyl-CoA ligase ACL891, MFDHMP-3C-CoA would then be restricted to peroxisomes for the following beta-oxidation pathway steps. The peroxisomal beta-oxidation machinery than converts MFDHMP-3C-CoA into MPA_CoA, via a beta-oxidation chain-shortening process. Finally mpaH acts as a peroxisomal acyl-CoA hydrolase with high substrate specificity toward MPA-CoA to release the final product MPA. In Penicillium roqueforti (strain FM164), this protein is Type I acyl-CoA thioesterase mpaH.